The following is a 667-amino-acid chain: DNA ligase (667 aa).

NAD(+) contacts are provided by residues 32–36 (DSEYD), 81–82 (SL), and Glu-110. The active-site N6-AMP-lysine intermediate is Lys-112. Positions 133, 167, 283, and 307 each coordinate NAD(+). The Zn(2+) site is built by Cys-401, Cys-404, Cys-419, and Cys-424. The BRCT domain occupies 586–667 (EGHPEFSGKT…FVDKQNELNS (82 aa)).

Belongs to the NAD-dependent DNA ligase family. LigA subfamily. It depends on Mg(2+) as a cofactor. Requires Mn(2+) as cofactor.

It catalyses the reaction NAD(+) + (deoxyribonucleotide)n-3'-hydroxyl + 5'-phospho-(deoxyribonucleotide)m = (deoxyribonucleotide)n+m + AMP + beta-nicotinamide D-nucleotide.. Its function is as follows. DNA ligase that catalyzes the formation of phosphodiester linkages between 5'-phosphoryl and 3'-hydroxyl groups in double-stranded DNA using NAD as a coenzyme and as the energy source for the reaction. It is essential for DNA replication and repair of damaged DNA. This is DNA ligase from Staphylococcus aureus (strain COL).